The primary structure comprises 948 residues: MKKNIALMALTGILTLASCGQNGTGTTPTADACATANTCSVTVNISGVSSADFDVTMDGKTTSMTLSNGQKLPVAKTGTVTLTPKAKDGYTTPAAQSTTISSTNLTPSVNFAYTTVPSTGNGNGNGGTTPTQPFTLNITSPTNGAAATTGTPIRVVFTSSVALSSATCKIGNSAAVNAQVSSTGGYCDVTPTTAGGGLITVTGTANGQTVSSTVTVDVKAPVVDNRYGTVTPAGDQELTLTNEGIVKDADNGWRRLGQGVSTPSDPNGNVDIYVKGTVNFSVNAAAGSKVEVFLARTTGSDVPTNDDVQAGDVLRSVASTSGTETFSLDSRRLAEFDGVRKWIVVRINGTQVTYQPVIADNKGPQQPDPELNGVQNAYSNILNNYNNSGLTYVRGDVNVFTGNPSLQDREFGQAPLGSSFVQRRPSGFESIRYYLVPETAFGNKALQESDEMLRAKAIKSVATVVSAPVLEPGTVKATSFSRVIGSGATSTVTPKAQDNVTYRVYAISRDQLGNETASATYELVRFDNVGPTITGSVIRDTSDLPFASQEPERCLSDIATITLGGITDNAGGVGLNPGQGLTFTLGGRQIQAGQFDTNQLADGEYTIGFNSLTDALGNPVVSAPTNAKVYIDNTDPTVNFNRAVMQGTFASGERVSVESDASDGGCGVYETRLFWDTDNGVVDDATTTPAIGHPVQFARQRVTDGAKADSLNAGWNALQLPNGAGAVYLRALVVDRAGNATISTTPIVVNAKITNQARPLLGGFDAFKRNASAQFMSNSNAISGVNGTAVTPNTTANSALDNILSLDSVGTLTTNAYLPRGATETAITEKIRNVGAYGRFDATQWNRIRDYQLNTDPTLRSAYVNAGNLANQRGNNWRIRTPWVELGSSDTANTQQKFDFNSDLLNDFYFGRTFGNNDNVNLFSYDQFNGIVSGTAGAYSFYGETVQK.

Residues 1 to 17 (MKKNIALMALTGILTLA) form the signal peptide. Disulfide bonds link cysteine 168/cysteine 187 and cysteine 554/cysteine 666.

In terms of processing, glycosylated. Contains tightly bound reducing sugars (six per polypeptide chain) and fatty acids (covalently bound and located in the N-terminal region).

The protein resides in the secreted. Its subcellular location is the cell wall. It is found in the S-layer. Its function is as follows. Shape maintenance, possible protection from noxious enzymes or exogenous and unsettling DNA, and may mediate homotypic cell-cell contacts. The polypeptide is Hexagonally packed intermediate-layer surface protein (hpi) (Deinococcus radiodurans (strain ATCC 13939 / DSM 20539 / JCM 16871 / CCUG 27074 / LMG 4051 / NBRC 15346 / NCIMB 9279 / VKM B-1422 / R1)).